The following is a 107-amino-acid chain: U1-lycotoxin-Ls1o (107 aa).

A signal peptide spans 1–20; it reads MMKVLVVVALLVTLISYSSS. The propeptide occupies 21–41; the sequence is EGIDDLEADELLSLMANEQTR. Disulfide bonds link C44–C59, C51–C68, C58–C86, and C70–C84.

This sequence belongs to the neurotoxin 19 (CSTX) family. 04 (U1-Lctx) subfamily. In terms of tissue distribution, expressed by the venom gland.

It localises to the secreted. This Lycosa singoriensis (Wolf spider) protein is U1-lycotoxin-Ls1o.